We begin with the raw amino-acid sequence, 715 residues long: Polyphosphate kinase (715 aa).

Asn-60 is a binding site for ATP. 2 residues coordinate Mg(2+): Arg-380 and Arg-410. Residue His-440 is the Phosphohistidine intermediate of the active site. 3 residues coordinate ATP: Tyr-473, Arg-569, and His-597.

This sequence belongs to the polyphosphate kinase 1 (PPK1) family. Requires Mg(2+) as cofactor. In terms of processing, an intermediate of this reaction is the autophosphorylated ppk in which a phosphate is covalently linked to a histidine residue through a N-P bond.

The enzyme catalyses [phosphate](n) + ATP = [phosphate](n+1) + ADP. In terms of biological role, catalyzes the reversible transfer of the terminal phosphate of ATP to form a long-chain polyphosphate (polyP). This chain is Polyphosphate kinase, found in Erythrobacter litoralis (strain HTCC2594).